Consider the following 397-residue polypeptide: Phosphoglycerate kinase (397 aa).

Residues 21–23, Arg-37, 60–63, Arg-119, and Arg-152 contribute to the substrate site; these read DFN and HLGR. Residues Lys-203, Gly-294, Glu-325, and 354-357 contribute to the ATP site; that span reads GGDS.

The protein belongs to the phosphoglycerate kinase family. Monomer.

Its subcellular location is the cytoplasm. It carries out the reaction (2R)-3-phosphoglycerate + ATP = (2R)-3-phospho-glyceroyl phosphate + ADP. It functions in the pathway carbohydrate degradation; glycolysis; pyruvate from D-glyceraldehyde 3-phosphate: step 2/5. The chain is Phosphoglycerate kinase from Chlorobium phaeobacteroides (strain BS1).